Consider the following 278-residue polypeptide: ATP-dependent dethiobiotin synthetase BioD 1 (278 aa).

51–56 (NVGKTI) contributes to the ATP binding site. Threonine 55 contacts Mg(2+). Lysine 76 is an active-site residue. Aspartate 102 provides a ligand contact to ATP. Aspartate 102 and glutamate 163 together coordinate Mg(2+). Residues 223–224 (NR) and 252–254 (PYI) each bind ATP.

Belongs to the dethiobiotin synthetase family. In terms of assembly, homodimer. Mg(2+) serves as cofactor.

The protein localises to the cytoplasm. The enzyme catalyses (7R,8S)-7,8-diammoniononanoate + CO2 + ATP = (4R,5S)-dethiobiotin + ADP + phosphate + 3 H(+). It participates in cofactor biosynthesis; biotin biosynthesis; biotin from 7,8-diaminononanoate: step 1/2. Catalyzes a mechanistically unusual reaction, the ATP-dependent insertion of CO2 between the N7 and N8 nitrogen atoms of 7,8-diaminopelargonic acid (DAPA, also called 7,8-diammoniononanoate) to form a ureido ring. The protein is ATP-dependent dethiobiotin synthetase BioD 1 of Haemophilus ducreyi (strain 35000HP / ATCC 700724).